The chain runs to 181 residues: MMNISGPREGDFITIKSYKHDGSLHRTWRDTMVLKTSENALIGCNDHTLVTESDGRRWITREPALVYFHKHYWFNIVTMIRENGVSYYCNLASPAVLDKEALKYIDYDLDVKVFPNGEKRLLDVDEYEDHGNKWHYSADIDKILKHNVRVLVDWINNGKGPFSKEYVEIWYNRYLELSRQQ.

Arg26 functions as the Proton donor in the catalytic mechanism. Mg(2+)-binding residues include Asn90, Asp106, Asp108, Asp110, Asp123, and Glu126.

It belongs to the Ntdp family. Mg(2+) serves as cofactor.

The catalysed reaction is a ribonucleoside 5'-triphosphate + H2O = a ribonucleoside 5'-diphosphate + phosphate + H(+). It carries out the reaction a ribonucleoside 5'-diphosphate + H2O = a ribonucleoside 5'-phosphate + phosphate + H(+). Functionally, has nucleoside phosphatase activity towards nucleoside triphosphates and nucleoside diphosphates. The polypeptide is Nucleoside triphosphate/diphosphate phosphatase (Ligilactobacillus salivarius (strain UCC118) (Lactobacillus salivarius)).